The chain runs to 511 residues: Putative polyol transporter 1 (511 aa).

The next 12 helical transmembrane spans lie at Phe27–Met47, Val63–Ala83, Tyr94–Thr114, Phe124–Val144, Gly151–Ser171, Phe186–Pro206, Ile284–Val304, Leu324–Val344, Ala351–Leu371, Trp384–Ala404, Gly424–Leu444, and Gly454–Leu474.

It belongs to the major facilitator superfamily. Sugar transporter (TC 2.A.1.1) family.

The protein resides in the membrane. Functionally, plasma membrane sugar-proton symporter. In Arabidopsis thaliana (Mouse-ear cress), this protein is Putative polyol transporter 1 (PLT1).